Reading from the N-terminus, the 305-residue chain is Membrane glycoprotein UL142 (305 aa).

The signal sequence occupies residues 1-19; it reads MRIEWACWLFGYFVSSVGS. Residues 20-270 lie on the Lumenal side of the membrane; it reads ERSLSYRYHL…QKTNNTTSPW (251 aa). The helical transmembrane segment at 271-288 threads the bilayer; it reads VYAIPMGATATIGAGLYI. Over 289-305 the chain is Cytoplasmic; that stretch reads GKHFTPVKFVYEVWRGQ.

In terms of assembly, interacts with host MICA and ULBP3.

It is found in the host endoplasmic reticulum membrane. The protein resides in the host Golgi apparatus membrane. Participates in the inhibition of the host immune response. Prevents host NK cell-mediated lysis of the infected cell by preventing the KLRK1 ligand 3/ULBP3 trafficking to the cell surface. Also retains another KLRK1 ligand, MHC class I-related chain A/MICA, in the Golgi apparatus to avoid its surface expression. The chain is Membrane glycoprotein UL142 (UL142) from Homo sapiens (Human).